Consider the following 1502-residue polypeptide: Clustered mitochondria protein homolog (1502 aa).

6 disordered regions span residues 1–62 (MSES…EPLD), 571–615 (AQAE…NPMM), 755–799 (AEAE…EEDR), 1054–1085 (KDQEEEENKREENIKSKEKKKGSKAGAKGETV), 1381–1403 (ARERIGGGAASTSRPTGIRRLGG), and 1429–1502 (GQGG…GAKR). Residues 7 to 35 (AAAQNGQAEEQQLQQQLDEQQQLEEQQQL) are compositionally biased toward low complexity. Residues 53–62 (KPKDSTEPLD) show a composition bias toward basic and acidic residues. In terms of domain architecture, Clu spans 399 to 693 (EILRTQLAFL…RLAPVDVEWL (295 aa)). Over residues 575 to 586 (TEAEAETADAVE) the composition is skewed to acidic residues. The segment covering 587 to 606 (GEQKKEDWVDVEKPTEKSGS) has biased composition (basic and acidic residues). Low complexity predominate over residues 781-792 (EEQSAAASAAAA). The segment covering 1054–1069 (KDQEEEENKREENIKS) has biased composition (basic and acidic residues). Positions 1429-1451 (GQGGNPSANAAAATAGQGEQANG) are enriched in low complexity. Positions 1462–1471 (RGTESLEELV) are enriched in basic and acidic residues. Residues 1486 to 1502 (KRGKNALRGKRRTGAKR) show a composition bias toward basic residues.

This sequence belongs to the CLU family. May associate with the eukaryotic translation initiation factor 3 (eIF-3) complex.

It is found in the cytoplasm. MRNA-binding protein involved in proper cytoplasmic distribution of mitochondria. This chain is Clustered mitochondria protein homolog, found in Cryptococcus neoformans var. neoformans serotype D (strain B-3501A) (Filobasidiella neoformans).